We begin with the raw amino-acid sequence, 171 residues long: SWR1 complex subunit 6 (171 aa).

A disordered region spans residues 63–87; that stretch reads DEDDDLGYLQKKQHKGSKRKTRQAK. Positions 73–85 are enriched in basic residues; sequence KKQHKGSKRKTRQ. Zn(2+) is bound by residues Cys-134, Cys-137, Cys-145, Cys-148, Cys-153, Cys-157, His-161, and Cys-166. Residues 134 to 166 form an HIT-type zinc finger; that stretch reads CSVCGYIAGYNCCLCGMRFCSIRCQNIHKDTRC.

It belongs to the ZNHIT1 family. As to quaternary structure, homodimer. Component of the SWR1 chromatin-remodeling complex composed of at least ARP6/ESD1/SUF3, PIE1, SWC6, SWC2 and H2AZs (HTA8, HTA9, HTA11). Interacts directly with ARP6, PIE1 and SWC2. Interacts with FLX and SUF4, two component of the transcription activator complex FRI-C, and with ASHH2 and TAF14. As to expression, expressed in root, lateral root primordia, shoot apex, leaves, stems, inflorescences, flowers, axillary buds, developing siliques and premature seeds.

The protein localises to the nucleus speckle. The protein resides in the nucleus. Its function is as follows. Component of the SWR1 complex which mediates the ATP-dependent exchange of histone H2A for the H2A variant H2A.F/Z leading to transcriptional regulation of selected genes (e.g. FLC) by chromatin remodeling. Coodinates SWR1-C, FRI-C (FLC transcription activator complex), histone methyltransferase and general transcription factors. Represses flowering by positively regulating FLC and MAF4. Binds to the promoter region of FLC chromatin. The protein is SWR1 complex subunit 6 (SWC6) of Arabidopsis thaliana (Mouse-ear cress).